Here is a 224-residue protein sequence, read N- to C-terminus: UPF0758 protein Noc_0236 (224 aa).

The region spanning 102-224 (VLTDPQTTQR…TLSFAERGLL (123 aa)) is the MPN domain. Residues His173, His175, and Asp186 each coordinate Zn(2+). The short motif at 173 to 186 (HNHPSGVAEPSRAD) is the JAMM motif element.

The protein belongs to the UPF0758 family.

This is UPF0758 protein Noc_0236 from Nitrosococcus oceani (strain ATCC 19707 / BCRC 17464 / JCM 30415 / NCIMB 11848 / C-107).